The sequence spans 408 residues: Tyrosine--tRNA ligase (408 aa).

Tyrosine 35 is a binding site for L-tyrosine. Residues 40–49 carry the 'HIGH' region motif; the sequence is PTADSLHVGH. L-tyrosine is bound by residues tyrosine 168 and glutamine 172. The 'KMSKS' region motif lies at 228–232; sequence KMGKT. Lysine 231 contacts ATP. An S4 RNA-binding domain is found at 342–407; sequence INIIDLLLKT…GKKTYHRVKL (66 aa).

This sequence belongs to the class-I aminoacyl-tRNA synthetase family. TyrS type 1 subfamily. As to quaternary structure, homodimer.

It is found in the cytoplasm. The enzyme catalyses tRNA(Tyr) + L-tyrosine + ATP = L-tyrosyl-tRNA(Tyr) + AMP + diphosphate + H(+). Catalyzes the attachment of tyrosine to tRNA(Tyr) in a two-step reaction: tyrosine is first activated by ATP to form Tyr-AMP and then transferred to the acceptor end of tRNA(Tyr). The protein is Tyrosine--tRNA ligase of Acetivibrio thermocellus (strain ATCC 27405 / DSM 1237 / JCM 9322 / NBRC 103400 / NCIMB 10682 / NRRL B-4536 / VPI 7372) (Clostridium thermocellum).